The chain runs to 357 residues: Protein RecA (357 aa).

67 to 74 is an ATP binding site; it reads GPESSGKT. The segment at 333 to 357 is disordered; that stretch reads NELTPATAGNSHDEDAFADEGNEEF. The span at 348-357 shows a compositional bias: acidic residues; the sequence is AFADEGNEEF.

This sequence belongs to the RecA family.

It localises to the cytoplasm. Its function is as follows. Can catalyze the hydrolysis of ATP in the presence of single-stranded DNA, the ATP-dependent uptake of single-stranded DNA by duplex DNA, and the ATP-dependent hybridization of homologous single-stranded DNAs. It interacts with LexA causing its activation and leading to its autocatalytic cleavage. The chain is Protein RecA from Pectobacterium carotovorum subsp. carotovorum (strain PC1).